The sequence spans 511 residues: Lysine--tRNA ligase (511 aa).

The Mg(2+) site is built by glutamate 422 and glutamate 429.

Belongs to the class-II aminoacyl-tRNA synthetase family. As to quaternary structure, homodimer. Requires Mg(2+) as cofactor.

Its subcellular location is the cytoplasm. The catalysed reaction is tRNA(Lys) + L-lysine + ATP = L-lysyl-tRNA(Lys) + AMP + diphosphate. The protein is Lysine--tRNA ligase of Chlorobaculum tepidum (strain ATCC 49652 / DSM 12025 / NBRC 103806 / TLS) (Chlorobium tepidum).